A 278-amino-acid chain; its full sequence is Bifunctional protein FolD (278 aa).

NADP(+)-binding positions include 164-166 and Thr-228; that span reads GRS.

This sequence belongs to the tetrahydrofolate dehydrogenase/cyclohydrolase family. In terms of assembly, homodimer.

It carries out the reaction (6R)-5,10-methylene-5,6,7,8-tetrahydrofolate + NADP(+) = (6R)-5,10-methenyltetrahydrofolate + NADPH. The enzyme catalyses (6R)-5,10-methenyltetrahydrofolate + H2O = (6R)-10-formyltetrahydrofolate + H(+). It functions in the pathway one-carbon metabolism; tetrahydrofolate interconversion. Its function is as follows. Catalyzes the oxidation of 5,10-methylenetetrahydrofolate to 5,10-methenyltetrahydrofolate and then the hydrolysis of 5,10-methenyltetrahydrofolate to 10-formyltetrahydrofolate. The protein is Bifunctional protein FolD of Mycoplasmopsis synoviae (strain 53) (Mycoplasma synoviae).